The chain runs to 360 residues: Heat-inducible transcription repressor HrcA (360 aa).

It belongs to the HrcA family.

Functionally, negative regulator of class I heat shock genes (grpE-dnaK-dnaJ and groELS operons). Prevents heat-shock induction of these operons. This chain is Heat-inducible transcription repressor HrcA, found in Streptococcus thermophilus (strain CNRZ 1066).